Consider the following 308-residue polypeptide: Membrane protein insertase YidC 1 (308 aa).

Positions 1–22 (MKSIKRFALSAMGVAMLLVLTG) are cleaved as a signal peptide. C23 carries N-palmitoyl cysteine lipidation. The S-diacylglycerol cysteine moiety is linked to residue C23. The next 5 membrane-spanning stretches (helical) occupy residues 60–80 (FGVA…PLGI), 135–155 (FGGV…AIYF), 168–188 (YLGI…GVLY), 211–226 (MIYM…SLFS), and 232–252 (LYWV…NYIV). Positions 263 to 308 (ELAKNPPKASAFSKPSGRKDVTPEQPTAITSKKKHKNRNAGKQRSR) are disordered. The span at 293–308 (SKKKHKNRNAGKQRSR) shows a compositional bias: basic residues.

The protein belongs to the OXA1/ALB3/YidC family. Type 2 subfamily.

The protein resides in the cell membrane. Functionally, required for the insertion and/or proper folding and/or complex formation of integral membrane proteins into the membrane. Involved in integration of membrane proteins that insert both dependently and independently of the Sec translocase complex, as well as at least some lipoproteins. This is Membrane protein insertase YidC 1 from Streptococcus pneumoniae serotype 4 (strain ATCC BAA-334 / TIGR4).